We begin with the raw amino-acid sequence, 1265 residues long: Cohesin subunit SA-1 (1265 aa).

Polar residues predominate over residues 1–16 (MITSELSVLQDSTNES). Disordered regions lie at residues 1–21 (MITSELSVLQDSTNESAVMHT) and 37–91 (DLEV…EGDP). A compositionally biased stretch (basic and acidic residues) spans 62–73 (TPGDRSRAEPGS). One can recognise an SCD domain in the interval 303–388 (FVHRYRDAIA…NRFKDRIVSM (86 aa)). Disordered stretches follow at residues 1063-1097 (GDEDRLSVNSGGSNSKGSSVRSKKGRPPLHKKRVI) and 1111-1130 (DTIQTPGALTTPQLTSTVLR). Over residues 1069 to 1082 (SVNSGGSNSKGSSV) the composition is skewed to low complexity. Positions 1083-1095 (RSKKGRPPLHKKR) are enriched in basic residues. Residues 1111–1129 (DTIQTPGALTTPQLTSTVL) are compositionally biased toward polar residues.

The protein belongs to the SCC3 family. As to quaternary structure, interacts directly with RAD21 in cohesin complex. Cohesin complexes are composed of a heterodimer between and SMC3, which are attached via their hinge domain, and RAD21 which link them at their heads, and one STAG protein (STAG1 OR STAG2). In cohesin complexes, STAG1 is mutually exclusive with STAG2. Phosphorylated by PLK1. The large dissociation of cohesin from chromosome arms during prophase is partly due to its phosphorylation.

The protein resides in the nucleus. Its subcellular location is the chromosome. The protein localises to the centromere. Its function is as follows. Component of cohesin complex, a complex required for the cohesion of sister chromatids after DNA replication. The cohesin complex apparently forms a large proteinaceous ring within which sister chromatids can be trapped. At anaphase, the complex is cleaved and dissociates from chromatin, allowing sister chromatids to segregate. The cohesin complex may also play a role in spindle pole assembly during mitosis. This chain is Cohesin subunit SA-1 (stag1), found in Xenopus laevis (African clawed frog).